A 37-amino-acid chain; its full sequence is Large ribosomal subunit protein bL36c (37 aa).

It belongs to the bacterial ribosomal protein bL36 family.

Its subcellular location is the plastid. It is found in the chloroplast. In Oltmannsiellopsis viridis (Marine flagellate), this protein is Large ribosomal subunit protein bL36c.